Consider the following 842-residue polypeptide: Cation/H(+) antiporter 20 (842 aa).

Helical transmembrane passes span phenylalanine 26–leucine 46, valine 55–alanine 75, methionine 86–leucine 106, glycine 122–isoleucine 142, tyrosine 155–alanine 175, methionine 193–leucine 213, leucine 228–isoleucine 248, phenylalanine 283–isoleucine 303, phenylalanine 320–alanine 340, leucine 353–valine 373, alanine 380–isoleucine 400, and alanine 413–isoleucine 433. Residues aspartate 585 to glycine 595 show a composition bias toward basic and acidic residues. A disordered region spans residues aspartate 585–valine 605.

It belongs to the monovalent cation:proton antiporter 2 (CPA2) transporter (TC 2.A.37) family. CHX (TC 2.A.37.4) subfamily. As to expression, expressed in leaves and stems. Preferentially expressed in guards cells.

The protein localises to the endomembrane system. Operates as a K(+)/H(+) antiporter that maintains K(+) homeostasis in guard cells and could regulate pH. Plays a critical role in osmoregulation through the control of stomates opening. The polypeptide is Cation/H(+) antiporter 20 (CHX20) (Arabidopsis thaliana (Mouse-ear cress)).